A 213-amino-acid chain; its full sequence is Adenylate kinase (213 aa).

10-15 contributes to the ATP binding site; sequence GSGKGT. Positions 30–59 are NMP; sequence STGDLFRTNIENDTPLGKEIKQIVENGQLV. AMP-binding positions include Thr-31, Arg-36, 57 to 59, 85 to 88, and Gln-92; these read QLV and GFPR. Positions 121-158 are LID; the sequence is GRRICQSCCKIFNIYTLPTKEKEICDFCQGILYQRKDD. Arg-122 contacts ATP. Zn(2+)-binding residues include Cys-125 and Cys-128. Residue 131–132 participates in ATP binding; it reads IF. Residues Cys-145 and Cys-148 each coordinate Zn(2+). Arg-155 and Arg-166 together coordinate AMP. Position 194 (Lys-194) interacts with ATP.

It belongs to the adenylate kinase family. Monomer.

The protein localises to the cytoplasm. The catalysed reaction is AMP + ATP = 2 ADP. It participates in purine metabolism; AMP biosynthesis via salvage pathway; AMP from ADP: step 1/1. In terms of biological role, catalyzes the reversible transfer of the terminal phosphate group between ATP and AMP. Plays an important role in cellular energy homeostasis and in adenine nucleotide metabolism. The sequence is that of Adenylate kinase from Borrelia duttonii (strain Ly).